Consider the following 425-residue polypeptide: Pleckstrin homology domain-containing family A member 2 (425 aa).

Residues 7-113 (QNRICGFLDI…WVEALNQASK (107 aa)) form the PH 1 domain. Residue K141 forms a Glycyl lysine isopeptide (Lys-Gly) (interchain with G-Cter in SUMO2) linkage. The residue at position 184 (S184) is a Phosphoserine. The 101-residue stretch at 198 to 298 (PLIKSGYCVK…WIKEIGAAVQ (101 aa)) folds into the PH 2 domain. The span at 312-330 (SISLTRPGSSSLSSGPNSI) shows a compositional bias: low complexity. The disordered stretch occupies residues 312-332 (SISLTRPGSSSLSSGPNSILC). A phosphoserine mark is found at S314 and S349. The disordered stretch occupies residues 352–425 (SSWQPWTPVP…DDENIRTSDV (74 aa)). Residues 400–410 (RSEPQHPKEKP) show a composition bias toward basic and acidic residues.

Binds MPDZ and PTPN13. Highly expressed in heart, kidney, spleen and peripheral blood leukocytes. Detected at lower levels in brain, skeletal muscle, colon, thymus, liver, small intestine, placenta and lung.

The protein resides in the cytoplasm. It localises to the cell membrane. The protein localises to the nucleus. In terms of biological role, binds specifically to phosphatidylinositol 3,4-diphosphate (PtdIns3,4P2), but not to other phosphoinositides. May recruit other proteins to the plasma membrane. The chain is Pleckstrin homology domain-containing family A member 2 (PLEKHA2) from Homo sapiens (Human).